Reading from the N-terminus, the 539-residue chain is Hydroxylamine reductase (539 aa).

[4Fe-4S] cluster is bound by residues Cys-3, Cys-6, Cys-14, and Cys-20. Residues His-232, Glu-256, Cys-300, Cys-392, Cys-420, Cys-445, Glu-480, and Lys-482 each coordinate hybrid [4Fe-2O-2S] cluster. Cysteine persulfide is present on Cys-392.

It belongs to the HCP family. It depends on [4Fe-4S] cluster as a cofactor. The cofactor is hybrid [4Fe-2O-2S] cluster.

It is found in the cytoplasm. The catalysed reaction is A + NH4(+) + H2O = hydroxylamine + AH2 + H(+). Functionally, catalyzes the reduction of hydroxylamine to form NH(3) and H(2)O. This chain is Hydroxylamine reductase, found in Chlorobaculum tepidum (strain ATCC 49652 / DSM 12025 / NBRC 103806 / TLS) (Chlorobium tepidum).